Consider the following 409-residue polypeptide: Dihydrolipoyllysine-residue succinyltransferase component of 2-oxoglutarate dehydrogenase complex (409 aa).

A Lipoyl-binding domain is found at 2-77; the sequence is AIEILVPDLP…VSKQLLGKIS (76 aa). An N6-lipoyllysine modification is found at lysine 43. Over residues 83 to 107 the composition is skewed to polar residues; the sequence is DVSSATLKATNEPTPSDRQNAAIEN. The segment at 83–114 is disordered; sequence DVSSATLKATNEPTPSDRQNAAIENSHNHNAD. The Peripheral subunit-binding (PSBD) domain occupies 114 to 151; sequence DQSPVIRRLLAEHDLQADQIQGSGVGGRLTREDIEREI. Catalysis depends on residues histidine 380 and aspartate 384.

The protein belongs to the 2-oxoacid dehydrogenase family. Forms a 24-polypeptide structural core with octahedral symmetry. Part of the 2-oxoglutarate dehydrogenase (OGDH) complex composed of E1 (2-oxoglutarate dehydrogenase), E2 (dihydrolipoamide succinyltransferase) and E3 (dihydrolipoamide dehydrogenase); the complex contains multiple copies of the three enzymatic components (E1, E2 and E3). (R)-lipoate serves as cofactor.

It catalyses the reaction N(6)-[(R)-dihydrolipoyl]-L-lysyl-[protein] + succinyl-CoA = N(6)-[(R)-S(8)-succinyldihydrolipoyl]-L-lysyl-[protein] + CoA. It participates in amino-acid degradation; L-lysine degradation via saccharopine pathway; glutaryl-CoA from L-lysine: step 6/6. E2 component of the 2-oxoglutarate dehydrogenase (OGDH) complex which catalyzes the second step in the conversion of 2-oxoglutarate to succinyl-CoA and CO(2). In Haemophilus influenzae (strain ATCC 51907 / DSM 11121 / KW20 / Rd), this protein is Dihydrolipoyllysine-residue succinyltransferase component of 2-oxoglutarate dehydrogenase complex (sucB).